Here is a 30-residue protein sequence, read N- to C-terminus: Dermaseptin-DI4 (30 aa).

Expressed by the skin glands.

The protein resides in the secreted. Functionally, antibacterial activity against Gram-positive bacteria S.aureus and E.faecalis, and Gram-negative bacteria P.aeruginosa and E.coli. The polypeptide is Dermaseptin-DI4 (Phyllomedusa distincta (Monkey frog)).